We begin with the raw amino-acid sequence, 153 residues long: 3-hydroxyacyl-[acyl-carrier-protein] dehydratase FabZ (153 aa).

H56 is an active-site residue.

It belongs to the thioester dehydratase family. FabZ subfamily.

It localises to the cytoplasm. It catalyses the reaction a (3R)-hydroxyacyl-[ACP] = a (2E)-enoyl-[ACP] + H2O. Functionally, involved in unsaturated fatty acids biosynthesis. Catalyzes the dehydration of short chain beta-hydroxyacyl-ACPs and long chain saturated and unsaturated beta-hydroxyacyl-ACPs. This chain is 3-hydroxyacyl-[acyl-carrier-protein] dehydratase FabZ, found in Nitrosomonas europaea (strain ATCC 19718 / CIP 103999 / KCTC 2705 / NBRC 14298).